The sequence spans 321 residues: MIFVYALLALVITFVLVPVLIPTLKRMKFGQSIREEGPQSHMKKTGTPTMGGLTFLLSIVITSLVAIIFVDQANPIILLLFVTIGFGLIGFIDDYIIVVKKNNQGLTSKQKFLAQIGIAIIFFVLSNVFHLVNFSTSIHIPFTNVAIPLSFAYVIFIVFWQVGFSNAVNLTDGLDGLATGLSIIGFTMYAIMSFVLGETAIGIFCIIMLFALLGFLPYNINPAKVFMGDTGSLALGGIFATISIMLNQELSLIFIGLVFVIETLSVMLQVASFKLTGKRIFKMSPIHHHFELIGWSEWKVVTVFWAVGLISGLIGLWIGVH.

10 helical membrane-spanning segments follow: residues 1–21 (MIFV…PVLI), 50–70 (MGGL…IIFV), 76–96 (IILL…DDYI), 112–132 (FLAQ…FHLV), 140–160 (IPFT…IVFW), 176–196 (GLAT…SFVL), 200–220 (AIGI…PYNI), 225–245 (VFMG…ISIM), 250–270 (LSLI…MLQV), and 300–320 (VVTV…WIGV).

This sequence belongs to the glycosyltransferase 4 family. MraY subfamily. The cofactor is Mg(2+).

The protein resides in the cell membrane. It carries out the reaction UDP-N-acetyl-alpha-D-muramoyl-L-alanyl-gamma-D-glutamyl-L-lysyl-D-alanyl-D-alanine + di-trans,octa-cis-undecaprenyl phosphate = Mur2Ac(oyl-L-Ala-gamma-D-Glu-L-Lys-D-Ala-D-Ala)-di-trans,octa-cis-undecaprenyl diphosphate + UMP. Its pathway is cell wall biogenesis; peptidoglycan biosynthesis. Its function is as follows. Catalyzes the initial step of the lipid cycle reactions in the biosynthesis of the cell wall peptidoglycan: transfers peptidoglycan precursor phospho-MurNAc-pentapeptide from UDP-MurNAc-pentapeptide onto the lipid carrier undecaprenyl phosphate, yielding undecaprenyl-pyrophosphoryl-MurNAc-pentapeptide, known as lipid I. This chain is Phospho-N-acetylmuramoyl-pentapeptide-transferase, found in Staphylococcus aureus (strain Mu50 / ATCC 700699).